The chain runs to 129 residues: UPF0344 protein USA300HOU_0928 (129 aa).

Helical transmembrane passes span 1–21 (MLHL…ATYL), 36–56 (LHMI…WILI), 67–87 (MLLT…EVSI), and 99–119 (MFWI…ILPL).

This sequence belongs to the UPF0344 family.

It is found in the cell membrane. This Staphylococcus aureus (strain USA300 / TCH1516) protein is UPF0344 protein USA300HOU_0928.